A 52-amino-acid chain; its full sequence is MASKNREIIKLKSTESSEMYWTVKNKKKTSGRLELKKYDRKLRKHVIFKEAK.

This sequence belongs to the bacterial ribosomal protein bL33 family.

This Chlamydia trachomatis serovar L2 (strain ATCC VR-902B / DSM 19102 / 434/Bu) protein is Large ribosomal subunit protein bL33.